We begin with the raw amino-acid sequence, 92 residues long: Small ribosomal subunit protein uS19 (92 aa).

This sequence belongs to the universal ribosomal protein uS19 family.

In terms of biological role, protein S19 forms a complex with S13 that binds strongly to the 16S ribosomal RNA. The polypeptide is Small ribosomal subunit protein uS19 (Rickettsia africae (strain ESF-5)).